Reading from the N-terminus, the 463-residue chain is Chromosomal replication initiator protein DnaA (463 aa).

The interval 1-83 is domain I, interacts with DnaA modulators; it reads MSTNQIILTD…LQLFQHYNNT (83 aa). The domain II stretch occupies residues 83–124; the sequence is TIKSIEIITKELPGTTQTVTELPTKTFADIGSSELNSENIFS. The domain III, AAA+ region stretch occupies residues 125-343; the sequence is TLDVRFTFDN…GALNKVIAHS (219 aa). 4 residues coordinate ATP: G171, G173, K174, and T175. The interval 344 to 463 is domain IV, binds dsDNA; the sequence is NFTLKEITLE…INLLMKILQN (120 aa).

Belongs to the DnaA family. Oligomerizes as a right-handed, spiral filament on DNA at oriC.

It is found in the cytoplasm. Its function is as follows. Plays an essential role in the initiation and regulation of chromosomal replication. ATP-DnaA binds to the origin of replication (oriC) to initiate formation of the DNA replication initiation complex once per cell cycle. Binds the DnaA box (a 9 base pair repeat at the origin) and separates the double-stranded (ds)DNA. Forms a right-handed helical filament on oriC DNA; dsDNA binds to the exterior of the filament while single-stranded (ss)DNA is stabiized in the filament's interior. The ATP-DnaA-oriC complex binds and stabilizes one strand of the AT-rich DNA unwinding element (DUE), permitting loading of DNA polymerase. After initiation quickly degrades to an ADP-DnaA complex that is not apt for DNA replication. Binds acidic phospholipids. The sequence is that of Chromosomal replication initiator protein DnaA from Rickettsia conorii (strain ATCC VR-613 / Malish 7).